The sequence spans 90 residues: Barstar (90 aa).

This sequence belongs to the barstar family.

It is found in the cytoplasm. Its function is as follows. Inhibitor of the ribonuclease barnase. Forms a one-to-one non-covalent complex. The chain is Barstar from Bacillus amyloliquefaciens (Bacillus velezensis).